Reading from the N-terminus, the 65-residue chain is Potassium channel toxin kappa-KTx 2.6 (65 aa).

A signal peptide spans 1 to 27 (MKTSKMICAFLLVLVVGTFNDISGAYG). Residues 28 to 39 (EYVEDQHSFKIE) constitute a propeptide that is removed on maturation. Cystine bridges form between cysteine 45-cysteine 63 and cysteine 49-cysteine 59.

Belongs to the short scorpion toxin superfamily. Potassium channel inhibitor kappa-KTx family. Kappa-KTx 2 subfamily. In terms of tissue distribution, expressed by the venom gland.

The protein resides in the secreted. Its function is as follows. Potassium channel inhibitor (Kv). The protein is Potassium channel toxin kappa-KTx 2.6 of Opisthacanthus cayaporum (South American scorpion).